Here is a 331-residue protein sequence, read N- to C-terminus: DNA polymerase IV (331 aa).

The region spanning 1–174 is the UmuC domain; sequence FFAAVEMRDN…LPLAKIPGVG (174 aa). A Mg(2+)-binding site is contributed by D92. Residue E93 is part of the active site.

The protein belongs to the DNA polymerase type-Y family. In terms of assembly, monomer. The cofactor is Mg(2+).

It localises to the cytoplasm. The catalysed reaction is DNA(n) + a 2'-deoxyribonucleoside 5'-triphosphate = DNA(n+1) + diphosphate. In terms of biological role, poorly processive, error-prone DNA polymerase involved in untargeted mutagenesis. Copies undamaged DNA at stalled replication forks, which arise in vivo from mismatched or misaligned primer ends. These misaligned primers can be extended by PolIV. Exhibits no 3'-5' exonuclease (proofreading) activity. May be involved in translesional synthesis, in conjunction with the beta clamp from PolIII. This chain is DNA polymerase IV, found in Escherichia fergusonii.